We begin with the raw amino-acid sequence, 335 residues long: Holliday junction branch migration complex subunit RuvB (335 aa).

The interval 1–181 (MDRIVEIEKY…FGMQFRLEFY (181 aa)) is large ATPase domain (RuvB-L). ATP is bound by residues Leu-20, Arg-21, Gly-62, Lys-65, Thr-66, Thr-67, 128 to 130 (EDY), Arg-171, Tyr-181, and Arg-218. Thr-66 is a binding site for Mg(2+). The segment at 182-252 (KDSELALILQ…RANEALNSLG (71 aa)) is small ATPAse domain (RuvB-S). The tract at residues 255-335 (ELGFDAMDLR…LNYEKTLFEE (81 aa)) is head domain (RuvB-H). DNA contacts are provided by Arg-309 and Arg-314.

Belongs to the RuvB family. As to quaternary structure, homohexamer. Forms an RuvA(8)-RuvB(12)-Holliday junction (HJ) complex. HJ DNA is sandwiched between 2 RuvA tetramers; dsDNA enters through RuvA and exits via RuvB. An RuvB hexamer assembles on each DNA strand where it exits the tetramer. Each RuvB hexamer is contacted by two RuvA subunits (via domain III) on 2 adjacent RuvB subunits; this complex drives branch migration. In the full resolvosome a probable DNA-RuvA(4)-RuvB(12)-RuvC(2) complex forms which resolves the HJ.

The protein localises to the cytoplasm. It carries out the reaction ATP + H2O = ADP + phosphate + H(+). In terms of biological role, the RuvA-RuvB-RuvC complex processes Holliday junction (HJ) DNA during genetic recombination and DNA repair, while the RuvA-RuvB complex plays an important role in the rescue of blocked DNA replication forks via replication fork reversal (RFR). RuvA specifically binds to HJ cruciform DNA, conferring on it an open structure. The RuvB hexamer acts as an ATP-dependent pump, pulling dsDNA into and through the RuvAB complex. RuvB forms 2 homohexamers on either side of HJ DNA bound by 1 or 2 RuvA tetramers; 4 subunits per hexamer contact DNA at a time. Coordinated motions by a converter formed by DNA-disengaged RuvB subunits stimulates ATP hydrolysis and nucleotide exchange. Immobilization of the converter enables RuvB to convert the ATP-contained energy into a lever motion, pulling 2 nucleotides of DNA out of the RuvA tetramer per ATP hydrolyzed, thus driving DNA branch migration. The RuvB motors rotate together with the DNA substrate, which together with the progressing nucleotide cycle form the mechanistic basis for DNA recombination by continuous HJ branch migration. Branch migration allows RuvC to scan DNA until it finds its consensus sequence, where it cleaves and resolves cruciform DNA. In Campylobacter jejuni (strain RM1221), this protein is Holliday junction branch migration complex subunit RuvB.